Reading from the N-terminus, the 411-residue chain is 1-deoxy-D-xylulose 5-phosphate reductoisomerase (411 aa).

NADPH contacts are provided by T11, G12, S13, I14, and N124. Position 125 (K125) interacts with 1-deoxy-D-xylulose 5-phosphate. E126 lines the NADPH pocket. Position 150 (D150) interacts with Mn(2+). 4 residues coordinate 1-deoxy-D-xylulose 5-phosphate: S151, E152, S186, and H209. E152 is a Mn(2+) binding site. G215 is an NADPH binding site. 1-deoxy-D-xylulose 5-phosphate is bound by residues S222, N227, K228, and E231. E231 serves as a coordination point for Mn(2+).

The protein belongs to the DXR family. It depends on Mg(2+) as a cofactor. Mn(2+) is required as a cofactor.

The enzyme catalyses 2-C-methyl-D-erythritol 4-phosphate + NADP(+) = 1-deoxy-D-xylulose 5-phosphate + NADPH + H(+). Its pathway is isoprenoid biosynthesis; isopentenyl diphosphate biosynthesis via DXP pathway; isopentenyl diphosphate from 1-deoxy-D-xylulose 5-phosphate: step 1/6. Its function is as follows. Catalyzes the NADPH-dependent rearrangement and reduction of 1-deoxy-D-xylulose-5-phosphate (DXP) to 2-C-methyl-D-erythritol 4-phosphate (MEP). The chain is 1-deoxy-D-xylulose 5-phosphate reductoisomerase from Psychrobacter sp. (strain PRwf-1).